Here is a 429-residue protein sequence, read N- to C-terminus: Enolase (429 aa).

Residue glutamine 163 participates in (2R)-2-phosphoglycerate binding. Glutamate 205 serves as the catalytic Proton donor. Positions 242, 286, and 313 each coordinate Mg(2+). Residues lysine 338, arginine 367, serine 368, and lysine 389 each contribute to the (2R)-2-phosphoglycerate site. The Proton acceptor role is filled by lysine 338.

This sequence belongs to the enolase family. Mg(2+) serves as cofactor.

It localises to the cytoplasm. The protein localises to the secreted. The protein resides in the cell surface. The catalysed reaction is (2R)-2-phosphoglycerate = phosphoenolpyruvate + H2O. It participates in carbohydrate degradation; glycolysis; pyruvate from D-glyceraldehyde 3-phosphate: step 4/5. Functionally, catalyzes the reversible conversion of 2-phosphoglycerate (2-PG) into phosphoenolpyruvate (PEP). It is essential for the degradation of carbohydrates via glycolysis. The chain is Enolase from Geotalea uraniireducens (strain Rf4) (Geobacter uraniireducens).